Here is a 242-residue protein sequence, read N- to C-terminus: Small ribosomal subunit protein uS2 (242 aa).

The protein belongs to the universal ribosomal protein uS2 family.

This is Small ribosomal subunit protein uS2 from Aliivibrio fischeri (strain ATCC 700601 / ES114) (Vibrio fischeri).